Here is a 455-residue protein sequence, read N- to C-terminus: Exodeoxyribonuclease 7 large subunit (455 aa).

The protein belongs to the XseA family. Heterooligomer composed of large and small subunits.

It is found in the cytoplasm. The catalysed reaction is Exonucleolytic cleavage in either 5'- to 3'- or 3'- to 5'-direction to yield nucleoside 5'-phosphates.. Bidirectionally degrades single-stranded DNA into large acid-insoluble oligonucleotides, which are then degraded further into small acid-soluble oligonucleotides. The polypeptide is Exodeoxyribonuclease 7 large subunit (Oceanobacillus iheyensis (strain DSM 14371 / CIP 107618 / JCM 11309 / KCTC 3954 / HTE831)).